Reading from the N-terminus, the 292-residue chain is Elongation factor Ts (292 aa).

Positions 82-85 (TDFV) are involved in Mg(2+) ion dislocation from EF-Tu.

It belongs to the EF-Ts family.

Its subcellular location is the cytoplasm. Functionally, associates with the EF-Tu.GDP complex and induces the exchange of GDP to GTP. It remains bound to the aminoacyl-tRNA.EF-Tu.GTP complex up to the GTP hydrolysis stage on the ribosome. The sequence is that of Elongation factor Ts from Legionella pneumophila (strain Lens).